Here is a 204-residue protein sequence, read N- to C-terminus: tRNA (pseudouridine(54)-N(1))-methyltransferase (204 aa).

Residues Leu-130, Gly-157, 180-185 (LSPLEL), and Cys-190 contribute to the S-adenosyl-L-methionine site.

This sequence belongs to the methyltransferase superfamily. TrmY family. As to quaternary structure, homodimer.

Its subcellular location is the cytoplasm. It carries out the reaction pseudouridine(54) in tRNA + S-adenosyl-L-methionine = N(1)-methylpseudouridine(54) in tRNA + S-adenosyl-L-homocysteine + H(+). Specifically catalyzes the N1-methylation of pseudouridine at position 54 (Psi54) in tRNAs. This Methanococcus aeolicus (strain ATCC BAA-1280 / DSM 17508 / OCM 812 / Nankai-3) protein is tRNA (pseudouridine(54)-N(1))-methyltransferase.